Consider the following 310-residue polypeptide: Protein LRATD2 (310 aa).

The segment at 1–76 (MGNQVEKLTH…PPPQPQPYDP (76 aa)) is disordered. Positions 54 to 64 (PDGGGLPDGGD) are enriched in gly residues. A compositionally biased stretch (pro residues) spans 65 to 74 (GPPPPQPQPY). One can recognise an LRAT domain in the interval 122–217 (VEFVSQAQYP…CRYGKREFKI (96 aa)). The segment at 274 to 310 (HPAEPEEGDSNVARTTPPPGRPPAPSSEEEDGEAVAH) is disordered. A compositionally biased stretch (pro residues) spans 289 to 298 (TPPPGRPPAP). Positions 300–310 (SEEEDGEAVAH) are enriched in acidic residues.

This sequence belongs to the LRATD family. As to expression, expressed in esophageal squamous cell carcinomas.

This Homo sapiens (Human) protein is Protein LRATD2.